Here is an 84-residue protein sequence, read N- to C-terminus: Putative ribosomal RNA large subunit methyltransferase H 2 (84 aa).

Residues G33 and F52–F57 each bind S-adenosyl-L-methionine.

The protein belongs to the RNA methyltransferase RlmH family. As to quaternary structure, homodimer.

It localises to the cytoplasm. It catalyses the reaction pseudouridine(1915) in 23S rRNA + S-adenosyl-L-methionine = N(3)-methylpseudouridine(1915) in 23S rRNA + S-adenosyl-L-homocysteine + H(+). Its function is as follows. Specifically methylates the pseudouridine at position 1915 (m3Psi1915) in 23S rRNA. This Clostridium perfringens (strain SM101 / Type A) protein is Putative ribosomal RNA large subunit methyltransferase H 2 (rlmH2).